The primary structure comprises 79 residues: Small ribosomal subunit protein bS16 (79 aa).

The protein belongs to the bacterial ribosomal protein bS16 family.

This Oleidesulfovibrio alaskensis (strain ATCC BAA-1058 / DSM 17464 / G20) (Desulfovibrio alaskensis) protein is Small ribosomal subunit protein bS16.